Reading from the N-terminus, the 165-residue chain is Crossover junction endodeoxyribonuclease RuvC (165 aa).

Active-site residues include Asp-8, Glu-67, and Asp-139. Mg(2+)-binding residues include Asp-8, Glu-67, and Asp-139.

It belongs to the RuvC family. As to quaternary structure, homodimer which binds Holliday junction (HJ) DNA. The HJ becomes 2-fold symmetrical on binding to RuvC with unstacked arms; it has a different conformation from HJ DNA in complex with RuvA. In the full resolvosome a probable DNA-RuvA(4)-RuvB(12)-RuvC(2) complex forms which resolves the HJ. Requires Mg(2+) as cofactor.

The protein resides in the cytoplasm. It carries out the reaction Endonucleolytic cleavage at a junction such as a reciprocal single-stranded crossover between two homologous DNA duplexes (Holliday junction).. The RuvA-RuvB-RuvC complex processes Holliday junction (HJ) DNA during genetic recombination and DNA repair. Endonuclease that resolves HJ intermediates. Cleaves cruciform DNA by making single-stranded nicks across the HJ at symmetrical positions within the homologous arms, yielding a 5'-phosphate and a 3'-hydroxyl group; requires a central core of homology in the junction. The consensus cleavage sequence is 5'-(A/T)TT(C/G)-3'. Cleavage occurs on the 3'-side of the TT dinucleotide at the point of strand exchange. HJ branch migration catalyzed by RuvA-RuvB allows RuvC to scan DNA until it finds its consensus sequence, where it cleaves and resolves the cruciform DNA. The protein is Crossover junction endodeoxyribonuclease RuvC of Alkalilimnicola ehrlichii (strain ATCC BAA-1101 / DSM 17681 / MLHE-1).